Consider the following 325-residue polypeptide: Beta-ketoacyl-[acyl-carrier-protein] synthase III (325 aa).

Active-site residues include C116 and H252. The ACP-binding stretch occupies residues 253-257; the sequence is QANLR. N282 is an active-site residue.

Belongs to the thiolase-like superfamily. FabH family. Homodimer.

The protein resides in the cytoplasm. The enzyme catalyses malonyl-[ACP] + acetyl-CoA + H(+) = 3-oxobutanoyl-[ACP] + CO2 + CoA. Its pathway is lipid metabolism; fatty acid biosynthesis. In terms of biological role, catalyzes the condensation reaction of fatty acid synthesis by the addition to an acyl acceptor of two carbons from malonyl-ACP. Catalyzes the first condensation reaction which initiates fatty acid synthesis and may therefore play a role in governing the total rate of fatty acid production. Possesses both acetoacetyl-ACP synthase and acetyl transacylase activities. Its substrate specificity determines the biosynthesis of branched-chain and/or straight-chain of fatty acids. The protein is Beta-ketoacyl-[acyl-carrier-protein] synthase III of Xanthomonas axonopodis pv. citri (strain 306).